The primary structure comprises 312 residues: tRNA-dihydrouridine(16) synthase (312 aa).

Residues 7–9 and glutamine 68 contribute to the FMN site; that span reads PME. Cysteine 98 (proton donor) is an active-site residue. FMN contacts are provided by residues lysine 139, 200–202, and 224–225; these read NGE and GR.

Belongs to the Dus family. DusC subfamily. FMN is required as a cofactor.

It carries out the reaction 5,6-dihydrouridine(16) in tRNA + NADP(+) = uridine(16) in tRNA + NADPH + H(+). The catalysed reaction is 5,6-dihydrouridine(16) in tRNA + NAD(+) = uridine(16) in tRNA + NADH + H(+). Its function is as follows. Catalyzes the synthesis of 5,6-dihydrouridine (D), a modified base found in the D-loop of most tRNAs, via the reduction of the C5-C6 double bond in target uridines. Specifically modifies U16 in tRNAs. This is tRNA-dihydrouridine(16) synthase from Yersinia pestis.